A 283-amino-acid polypeptide reads, in one-letter code: Phosphatidylserine decarboxylase proenzyme (283 aa).

Residues Asp-89, His-146, and Ser-249 each act as charge relay system; for autoendoproteolytic cleavage activity in the active site. The Schiff-base intermediate with substrate; via pyruvic acid; for decarboxylase activity role is filled by Ser-249. Ser-249 bears the Pyruvic acid (Ser); by autocatalysis mark.

It belongs to the phosphatidylserine decarboxylase family. PSD-B subfamily. Prokaryotic type I sub-subfamily. In terms of assembly, heterodimer of a large membrane-associated beta subunit and a small pyruvoyl-containing alpha subunit. Requires pyruvate as cofactor. Post-translationally, is synthesized initially as an inactive proenzyme. Formation of the active enzyme involves a self-maturation process in which the active site pyruvoyl group is generated from an internal serine residue via an autocatalytic post-translational modification. Two non-identical subunits are generated from the proenzyme in this reaction, and the pyruvate is formed at the N-terminus of the alpha chain, which is derived from the carboxyl end of the proenzyme. The autoendoproteolytic cleavage occurs by a canonical serine protease mechanism, in which the side chain hydroxyl group of the serine supplies its oxygen atom to form the C-terminus of the beta chain, while the remainder of the serine residue undergoes an oxidative deamination to produce ammonia and the pyruvoyl prosthetic group on the alpha chain. During this reaction, the Ser that is part of the protease active site of the proenzyme becomes the pyruvoyl prosthetic group, which constitutes an essential element of the active site of the mature decarboxylase.

It is found in the cell membrane. It carries out the reaction a 1,2-diacyl-sn-glycero-3-phospho-L-serine + H(+) = a 1,2-diacyl-sn-glycero-3-phosphoethanolamine + CO2. The protein operates within phospholipid metabolism; phosphatidylethanolamine biosynthesis; phosphatidylethanolamine from CDP-diacylglycerol: step 2/2. Its function is as follows. Catalyzes the formation of phosphatidylethanolamine (PtdEtn) from phosphatidylserine (PtdSer). In Legionella pneumophila (strain Lens), this protein is Phosphatidylserine decarboxylase proenzyme.